The following is a 161-amino-acid chain: NADH-quinone oxidoreductase subunit I (161 aa).

4Fe-4S ferredoxin-type domains follow at residues 52 to 82 and 92 to 121; these read LRRY…IESS and TRYD…QGPN. [4Fe-4S] cluster is bound by residues cysteine 62, cysteine 65, cysteine 68, cysteine 72, cysteine 101, cysteine 104, cysteine 107, and cysteine 111.

It belongs to the complex I 23 kDa subunit family. In terms of assembly, NDH-1 is composed of 14 different subunits. Subunits NuoA, H, J, K, L, M, N constitute the membrane sector of the complex. [4Fe-4S] cluster serves as cofactor.

The protein localises to the cell inner membrane. It carries out the reaction a quinone + NADH + 5 H(+)(in) = a quinol + NAD(+) + 4 H(+)(out). In terms of biological role, NDH-1 shuttles electrons from NADH, via FMN and iron-sulfur (Fe-S) centers, to quinones in the respiratory chain. The immediate electron acceptor for the enzyme in this species is believed to be ubiquinone. Couples the redox reaction to proton translocation (for every two electrons transferred, four hydrogen ions are translocated across the cytoplasmic membrane), and thus conserves the redox energy in a proton gradient. The protein is NADH-quinone oxidoreductase subunit I of Pelagibacter ubique (strain HTCC1062).